A 238-amino-acid chain; its full sequence is Thiamine import ATP-binding protein ThiQ (238 aa).

The ABC transporter domain maps to 2–230 (LALDKVRYEY…HPHPELAQFV (229 aa)). ATP is bound at residue 32-39 (GPSGAGKS).

This sequence belongs to the ABC transporter superfamily. Thiamine importer (TC 3.A.1.19.1) family. The complex is composed of two ATP-binding proteins (ThiQ), two transmembrane proteins (ThiP) and a solute-binding protein (ThiB).

Its subcellular location is the cell inner membrane. It carries out the reaction thiamine(out) + ATP + H2O = thiamine(in) + ADP + phosphate + H(+). Functionally, part of the ABC transporter complex ThiBPQ involved in thiamine import. Responsible for energy coupling to the transport system. The polypeptide is Thiamine import ATP-binding protein ThiQ (Vibrio cholerae serotype O1 (strain ATCC 39315 / El Tor Inaba N16961)).